The following is a 184-amino-acid chain: GTP cyclohydrolase 1 (184 aa).

Zn(2+) contacts are provided by C75, H78, and C146.

Belongs to the GTP cyclohydrolase I family. Toroid-shaped homodecamer, composed of two pentamers of five dimers.

The catalysed reaction is GTP + H2O = 7,8-dihydroneopterin 3'-triphosphate + formate + H(+). Its pathway is cofactor biosynthesis; 7,8-dihydroneopterin triphosphate biosynthesis; 7,8-dihydroneopterin triphosphate from GTP: step 1/1. In Pseudoalteromonas atlantica (strain T6c / ATCC BAA-1087), this protein is GTP cyclohydrolase 1.